A 203-amino-acid chain; its full sequence is Thymidylate kinase (203 aa).

ATP is bound at residue 14–21 (GGEGIGKS).

It belongs to the thymidylate kinase family.

The catalysed reaction is dTMP + ATP = dTDP + ADP. Phosphorylation of dTMP to form dTDP in both de novo and salvage pathways of dTTP synthesis. This Rickettsia conorii (strain ATCC VR-613 / Malish 7) protein is Thymidylate kinase.